The sequence spans 232 residues: Ribonuclease 3 (232 aa).

The 130-residue stretch at 6 to 135 (QDYLAKTYGI…FIGALYLDQG (130 aa)) folds into the RNase III domain. E48 is a binding site for Mg(2+). D52 is a catalytic residue. D121 and E124 together coordinate Mg(2+). E124 is a catalytic residue. The 70-residue stretch at 161 to 230 (DAKTSLQEFL…AKHALEKLRM (70 aa)) folds into the DRBM domain.

It belongs to the ribonuclease III family. As to quaternary structure, homodimer. The cofactor is Mg(2+).

The protein localises to the cytoplasm. It catalyses the reaction Endonucleolytic cleavage to 5'-phosphomonoester.. In terms of biological role, digests double-stranded RNA. Involved in the processing of primary rRNA transcript to yield the immediate precursors to the large and small rRNAs (23S and 16S). Processes some mRNAs, and tRNAs when they are encoded in the rRNA operon. Processes pre-crRNA and tracrRNA of type II CRISPR loci if present in the organism. The sequence is that of Ribonuclease 3 from Limosilactobacillus fermentum (strain NBRC 3956 / LMG 18251) (Lactobacillus fermentum).